The chain runs to 340 residues: Phosphoribosylformylglycinamidine cyclo-ligase (340 aa).

It belongs to the AIR synthase family.

It localises to the cytoplasm. The catalysed reaction is 2-formamido-N(1)-(5-O-phospho-beta-D-ribosyl)acetamidine + ATP = 5-amino-1-(5-phospho-beta-D-ribosyl)imidazole + ADP + phosphate + H(+). It participates in purine metabolism; IMP biosynthesis via de novo pathway; 5-amino-1-(5-phospho-D-ribosyl)imidazole from N(2)-formyl-N(1)-(5-phospho-D-ribosyl)glycinamide: step 2/2. This is Phosphoribosylformylglycinamidine cyclo-ligase from Streptococcus gordonii (strain Challis / ATCC 35105 / BCRC 15272 / CH1 / DL1 / V288).